The chain runs to 91 residues: Small ribosomal subunit protein bS16 (91 aa).

The protein belongs to the bacterial ribosomal protein bS16 family.

The protein is Small ribosomal subunit protein bS16 of Exiguobacterium sibiricum (strain DSM 17290 / CCUG 55495 / CIP 109462 / JCM 13490 / 255-15).